The chain runs to 349 residues: Spermidine/putrescine import ATP-binding protein PotA (349 aa).

The ABC transporter domain occupies 7 to 237 (IELKGITKSY…PANSFVAKFI (231 aa)). 39-46 (GPSGCGKT) serves as a coordination point for ATP.

The protein belongs to the ABC transporter superfamily. Spermidine/putrescine importer (TC 3.A.1.11.1) family. As to quaternary structure, the complex is composed of two ATP-binding proteins (PotA), two transmembrane proteins (PotB and PotC) and a solute-binding protein (PotD).

Its subcellular location is the cell membrane. The enzyme catalyses ATP + H2O + polyamine-[polyamine-binding protein]Side 1 = ADP + phosphate + polyamineSide 2 + [polyamine-binding protein]Side 1.. Part of the ABC transporter complex PotABCD involved in spermidine/putrescine import. Responsible for energy coupling to the transport system. The protein is Spermidine/putrescine import ATP-binding protein PotA of Clostridium perfringens (strain SM101 / Type A).